A 212-amino-acid polypeptide reads, in one-letter code: FMN-dependent NAD(P)H:quinone oxidoreductase 1 (212 aa).

Residues Ser10, 16–18, and 97–100 each bind FMN; these read SQS and MYNF. Substrate is bound by residues Asn99 and Tyr131. FMN-binding positions include 145 to 148 and Glu187; that span reads SRGG. Glu188 contacts substrate.

Belongs to the azoreductase type 1 family. Homodimer. Homotetramer formed by a dimer of dimers when the ionic strength is high. Requires FMN as cofactor.

The catalysed reaction is 2 a quinone + NADPH + H(+) = 2 a 1,4-benzosemiquinone + NADP(+). It carries out the reaction 2 a quinone + NADH + H(+) = 2 a 1,4-benzosemiquinone + NAD(+). The enzyme catalyses N,N-dimethyl-1,4-phenylenediamine + anthranilate + 2 NAD(+) = 2-(4-dimethylaminophenyl)diazenylbenzoate + 2 NADH + 2 H(+). Azoreductase activity increases with salt strength. Quinone reductase that provides resistance to thiol-specific stress caused by electrophilic quinones. Shows a preference for benzoquinones. In terms of biological role, also exhibits azoreductase activity. Catalyzes the reductive cleavage of the azo bond in aromatic azo compounds to the corresponding amines. NADPH is the preferred electron donor for azoreductase activity, but it can also use NADH. Can reduce different classes of azo dyes, including the common azo dyes methyl red and p-aminoazobenzene sulfonamide (PAABSA). Can activate several azo pro-drugs used in the treatment of inflammatory bowel disease (IBD), including balsalazide, sulfasalazine and olsalazine. Also acts as a nitrodeductase, and can reduce and hence activate the nitroaromatic drug nitrofurazone, a broad spectrum antibiotic. This is FMN-dependent NAD(P)H:quinone oxidoreductase 1 from Pseudomonas aeruginosa (strain ATCC 15692 / DSM 22644 / CIP 104116 / JCM 14847 / LMG 12228 / 1C / PRS 101 / PAO1).